Consider the following 373-residue polypeptide: Chaperone protein DnaJ (373 aa).

Residues 4 to 68 (NYYQILGVSK…QKRAAYDRLG (65 aa)) form the J domain. The segment at 136–214 (GIEKNINFSS…CHGMGRYHKQ (79 aa)) adopts a CR-type zinc-finger fold. The Zn(2+) site is built by cysteine 149, cysteine 152, cysteine 166, cysteine 169, cysteine 188, cysteine 191, cysteine 202, and cysteine 205. CXXCXGXG motif repeat units follow at residues 149–156 (CDTCHGSG), 166–173 (CDACSGVG), 188–195 (CHKCQGNG), and 202–209 (CKKCHGMG).

The protein belongs to the DnaJ family. Homodimer. It depends on Zn(2+) as a cofactor.

It localises to the cytoplasm. In terms of biological role, participates actively in the response to hyperosmotic and heat shock by preventing the aggregation of stress-denatured proteins and by disaggregating proteins, also in an autonomous, DnaK-independent fashion. Unfolded proteins bind initially to DnaJ; upon interaction with the DnaJ-bound protein, DnaK hydrolyzes its bound ATP, resulting in the formation of a stable complex. GrpE releases ADP from DnaK; ATP binding to DnaK triggers the release of the substrate protein, thus completing the reaction cycle. Several rounds of ATP-dependent interactions between DnaJ, DnaK and GrpE are required for fully efficient folding. Also involved, together with DnaK and GrpE, in the DNA replication of plasmids through activation of initiation proteins. The chain is Chaperone protein DnaJ from Rickettsia rickettsii (strain Iowa).